The chain runs to 314 residues: DNA-directed RNA polymerase subunit alpha (314 aa).

Residues 1–228 (MIEIEKPKIE…EHLNIFVGLT (228 aa)) form an alpha N-terminal domain (alpha-NTD) region. Positions 245–314 (KEKVLEMTIE…ELGLSLRKDD (70 aa)) are alpha C-terminal domain (alpha-CTD).

The protein belongs to the RNA polymerase alpha chain family. As to quaternary structure, homodimer. The RNAP catalytic core consists of 2 alpha, 1 beta, 1 beta' and 1 omega subunit. When a sigma factor is associated with the core the holoenzyme is formed, which can initiate transcription.

It carries out the reaction RNA(n) + a ribonucleoside 5'-triphosphate = RNA(n+1) + diphosphate. DNA-dependent RNA polymerase catalyzes the transcription of DNA into RNA using the four ribonucleoside triphosphates as substrates. The protein is DNA-directed RNA polymerase subunit alpha of Geobacillus thermodenitrificans (strain NG80-2).